The chain runs to 348 residues: Anthranilate phosphoribosyltransferase (348 aa).

5-phospho-alpha-D-ribose 1-diphosphate-binding positions include glycine 83, 86–87 (GD), threonine 91, 93–96 (NVST), 111–119 (KHGNRAASS), and threonine 123. Glycine 83 contacts anthranilate. Mg(2+) is bound at residue serine 95. An anthranilate-binding site is contributed by asparagine 114. Arginine 169 is an anthranilate binding site. Mg(2+)-binding residues include aspartate 227 and glutamate 228.

The protein belongs to the anthranilate phosphoribosyltransferase family. As to quaternary structure, homodimer. It depends on Mg(2+) as a cofactor.

The catalysed reaction is N-(5-phospho-beta-D-ribosyl)anthranilate + diphosphate = 5-phospho-alpha-D-ribose 1-diphosphate + anthranilate. Its pathway is amino-acid biosynthesis; L-tryptophan biosynthesis; L-tryptophan from chorismate: step 2/5. In terms of biological role, catalyzes the transfer of the phosphoribosyl group of 5-phosphorylribose-1-pyrophosphate (PRPP) to anthranilate to yield N-(5'-phosphoribosyl)-anthranilate (PRA). The polypeptide is Anthranilate phosphoribosyltransferase (Thermobifida fusca (strain YX)).